The sequence spans 597 residues: Alkyldihydroxyacetonephosphate synthase (597 aa).

Residues Ile131–Ile313 enclose the FAD-binding PCMH-type domain. FAD is bound by residues Pro163–Ser169, Asp232–Thr238, Thr245–Ser248, and Glu297–Val303. Arg444 lines the substrate pocket. Catalysis depends on Tyr507, which acts as the Proton donor/acceptor. Residues His544 to His546 are important for enzyme activity. The Microbody targeting signal motif lies at Cys595–Leu597.

The protein belongs to the FAD-binding oxidoreductase/transferase type 4 family. Homodimer. It depends on FAD as a cofactor.

The protein localises to the peroxisome. It catalyses the reaction a long chain fatty alcohol + a 1-acylglycerone 3-phosphate = a 1-O-alkylglycerone 3-phosphate + a long-chain fatty acid + H(+). It functions in the pathway glycerolipid metabolism; ether lipid biosynthesis. Catalyzes the exchange of an acyl for a long-chain alkyl group and the formation of the ether bond in the biosynthesis of ether phospholipids. The chain is Alkyldihydroxyacetonephosphate synthase (ads-1) from Caenorhabditis elegans.